We begin with the raw amino-acid sequence, 248 residues long: tRNA uridine(34) hydroxylase (248 aa).

A Rhodanese domain is found at 127 to 221 (RGRPLVLLDT…YFEEVGGEGY (95 aa)). Residue cysteine 181 is the Cysteine persulfide intermediate of the active site.

This sequence belongs to the TrhO family.

The catalysed reaction is uridine(34) in tRNA + AH2 + O2 = 5-hydroxyuridine(34) in tRNA + A + H2O. Its function is as follows. Catalyzes oxygen-dependent 5-hydroxyuridine (ho5U) modification at position 34 in tRNAs. In Xanthomonas euvesicatoria pv. vesicatoria (strain 85-10) (Xanthomonas campestris pv. vesicatoria), this protein is tRNA uridine(34) hydroxylase.